The primary structure comprises 269 residues: Serine/threonine-protein kinase ZRK7 (269 aa).

Positions 80–269 (FDWSYAIGVD…KNRLMVTVIT (190 aa)) constitute a Protein kinase domain. ATP contacts are provided by residues 86-94 (IGVDRFVWY) and K106. D205 functions as the Proton acceptor in the catalytic mechanism.

Belongs to the protein kinase superfamily. Ser/Thr protein kinase family. ZRK subfamily.

The enzyme catalyses L-seryl-[protein] + ATP = O-phospho-L-seryl-[protein] + ADP + H(+). It catalyses the reaction L-threonyl-[protein] + ATP = O-phospho-L-threonyl-[protein] + ADP + H(+). The polypeptide is Serine/threonine-protein kinase ZRK7 (Arabidopsis thaliana (Mouse-ear cress)).